Here is a 773-residue protein sequence, read N- to C-terminus: MKLSVLSVLLVSVAQAAAAPWRPREPRAAGSKRLTFNETVISAALSPSSISVQWIATENDGDYVYQEEDGSIKIESIVTNRSQTIVPAEKIPADAYSYWISPDLSAVLWATNYTKQYRHSFFADYYIQDVETLETVPLVEDMVGDIQYAEWSPSGDSIAFVRGNNLWTWSDGTVTAITKDGGPDMFHGVPDWIYEEEILGDRFALWFSPDSELLAFLTFNETGVPTFTVQYFMDNQEIAPPYPRELDIRYPKVSETNPTVKLNILQLSDNTVSTIPIDVFDPSELIVGEVAWVTDTHTELAVKAFNRVQDESKVVIVETASGETKIAHERDGTDGWLDNLLSISYVGPLALGSGDASSAYYVDLSDHSGWTHLYLFSTSGGDPIPLTEGEWEVTSIVSIDQERELVYYLSTQHHSTERHLYSVSYRTFEITPLVDDTVEAYWSVSFSAKAGYYILTYAGPSVPYQELYSVNQTAPLRTLTSNAALIEKLEEYALPNISYFELEIPSGEKLNVMQRLPVGFSPDKKYPVLFTPYGGPGAQEVSKRWQSLDFNAYIASDPELEYVTWTVDNRGTGYRGREFRSLVAKQLGKLEAEDQVYAAKQAAKLDWVDSEHIAIWGWSYGGYLTGKVLETDSGAFSLGLLTAPVSDWRLYDSMYTERYMKTLSTNAEGYNTTAIRHTDGFKNVEGGFLIQHGTGDDNVHFQNAAALGDTLIGNGVTPEKMQVQWFTDSDHSIRYNGGNVFLYRQLAQRLYKEKNRAKKEQHQWSKRSQDWVV.

Positions 1 to 18 (MKLSVLSVLLVSVAQAAA) are cleaved as a signal peptide. 6 N-linked (GlcNAc...) asparagine glycosylation sites follow: Asn-37, Asn-80, Asn-112, Asn-220, Asn-471, and Asn-496. Ser-619 acts as the Charge relay system in catalysis. An N-linked (GlcNAc...) asparagine glycan is attached at Asn-671. Catalysis depends on charge relay system residues Asp-696 and His-731.

It belongs to the peptidase S9B family.

Its subcellular location is the secreted. The enzyme catalyses Release of an N-terminal dipeptide, Xaa-Yaa-|-Zaa-, from a polypeptide, preferentially when Yaa is Pro, provided Zaa is neither Pro nor hydroxyproline.. Its function is as follows. Extracellular dipeptidyl-peptidase which removes N-terminal dipeptides sequentially from polypeptides having unsubstituted N-termini provided that the penultimate residue is proline. This Emericella nidulans (strain FGSC A4 / ATCC 38163 / CBS 112.46 / NRRL 194 / M139) (Aspergillus nidulans) protein is Probable dipeptidyl peptidase 4 (dpp4).